An 86-amino-acid chain; its full sequence is Large ribosomal subunit protein bL31 (86 aa).

Residues 65 to 86 (YGMGSADSATSKETKESKKSDK) form a disordered region. A compositionally biased stretch (basic and acidic residues) spans 74–86 (TSKETKESKKSDK).

This sequence belongs to the bacterial ribosomal protein bL31 family. Type A subfamily. As to quaternary structure, part of the 50S ribosomal subunit.

Its function is as follows. Binds the 23S rRNA. The sequence is that of Large ribosomal subunit protein bL31 from Prochlorococcus marinus subsp. pastoris (strain CCMP1986 / NIES-2087 / MED4).